The following is a 72-amino-acid chain: Translation initiation factor IF-1 (72 aa).

An S1-like domain is found at 1–72 (MAKEESIEVE…SKGRITYRYK (72 aa)).

It belongs to the IF-1 family. In terms of assembly, component of the 30S ribosomal translation pre-initiation complex which assembles on the 30S ribosome in the order IF-2 and IF-3, IF-1 and N-formylmethionyl-tRNA(fMet); mRNA recruitment can occur at any time during PIC assembly.

The protein localises to the cytoplasm. In terms of biological role, one of the essential components for the initiation of protein synthesis. Stabilizes the binding of IF-2 and IF-3 on the 30S subunit to which N-formylmethionyl-tRNA(fMet) subsequently binds. Helps modulate mRNA selection, yielding the 30S pre-initiation complex (PIC). Upon addition of the 50S ribosomal subunit IF-1, IF-2 and IF-3 are released leaving the mature 70S translation initiation complex. This Chlorobaculum tepidum (strain ATCC 49652 / DSM 12025 / NBRC 103806 / TLS) (Chlorobium tepidum) protein is Translation initiation factor IF-1.